Here is a 350-residue protein sequence, read N- to C-terminus: DNA polymerase IV (350 aa).

Residues 7–188 enclose the UmuC domain; that stretch reads IIHIDMDYFF…LPVKKLFGVG (182 aa). D11 and D106 together coordinate Mg(2+). The active site involves E107.

This sequence belongs to the DNA polymerase type-Y family. As to quaternary structure, monomer. Mg(2+) is required as a cofactor.

The protein resides in the cytoplasm. The catalysed reaction is DNA(n) + a 2'-deoxyribonucleoside 5'-triphosphate = DNA(n+1) + diphosphate. Functionally, poorly processive, error-prone DNA polymerase involved in untargeted mutagenesis. Copies undamaged DNA at stalled replication forks, which arise in vivo from mismatched or misaligned primer ends. These misaligned primers can be extended by PolIV. Exhibits no 3'-5' exonuclease (proofreading) activity. May be involved in translesional synthesis, in conjunction with the beta clamp from PolIII. The protein is DNA polymerase IV of Francisella philomiragia subsp. philomiragia (strain ATCC 25017 / CCUG 19701 / FSC 153 / O#319-036).